An 867-amino-acid chain; its full sequence is Cation/H(+) antiporter 23, chloroplastic (867 aa).

12 helical membrane passes run 43–63 (SGST…VANL), 75–95 (LYLP…PSVL), 112–132 (MVLE…LGLG), 146–166 (VIIA…LYYL), 175–195 (IISG…PDLA), 212–232 (AMCA…FGFA), 242–262 (KMMP…IFVI), 283–303 (HVWF…ACGV), 336–356 (GILM…GFML), 362–382 (FMMV…TVIT), 393–413 (AFAI…VLNA), and 427–447 (HMTI…AFAY). The segment at 848-867 (SMYEDEDEDDEEDHQYGIHR) is disordered. Residues 851–860 (EDEDEDDEED) are compositionally biased toward acidic residues.

Belongs to the monovalent cation:proton antiporter 2 (CPA2) transporter (TC 2.A.37) family. CHX (TC 2.A.37.4) subfamily. In terms of tissue distribution, specifically expressed in flower buds and pollen. Expressed in leaves, roots and stems.

It localises to the plastid. The protein localises to the chloroplast membrane. Its subcellular location is the endoplasmic reticulum membrane. Functionally, operates as a K(+)/H(+) antiporter or Na(+)/H(+) antiporter of the chloroplast envelope that functions in pH homeostasis and chloroplast development. Monovalent cation transporter with a preference for Cs(+), K(+) and Rb(+) relative to Na(+) or Li(+). Required for pollen tube guidance, but not for normal pollen development. May also be involved in the development or function of the female gametophyte. The protein is Cation/H(+) antiporter 23, chloroplastic (CHX23) of Arabidopsis thaliana (Mouse-ear cress).